We begin with the raw amino-acid sequence, 742 residues long: Mechanosensitive ion channel protein 9 (742 aa).

The tract at residues M1–R117 is disordered. Basic and acidic residues predominate over residues S17 to R26. 2 positions are modified to phosphoserine: S28 and S36. Over residues D105–R117 the composition is skewed to basic and acidic residues. S142 and S145 each carry phosphoserine. 6 helical membrane passes run A180 to I200, M221 to I241, N261 to G281, F292 to V312, L524 to A544, and L559 to V579.

It belongs to the MscS (TC 1.A.23) family. In terms of tissue distribution, detected in the epidermis, cortex, and endodermis of the root tip.

It is found in the cell membrane. Its function is as follows. Mechanosensitive channel that opens in response to stretch forces in the membrane lipid bilayer. The chain is Mechanosensitive ion channel protein 9 (MSL9) from Arabidopsis thaliana (Mouse-ear cress).